The chain runs to 267 residues: Elsinochrome reductase 1 (267 aa).

NADP(+)-binding residues include isoleucine 26, aspartate 72, asparagine 99, and arginine 132. Serine 149 (proton donor) is an active-site residue. Residues tyrosine 163, lysine 167, isoleucine 196, and threonine 198 each contribute to the NADP(+) site. Tyrosine 163 acts as the Proton acceptor in catalysis. The active-site Lowers pKa of active site Tyr is the lysine 167.

The protein belongs to the short-chain dehydrogenases/reductases (SDR) family.

Reductase; part of the gene cluster that mediates the biosynthesis of elsinochromes, pigments consisting of at least four interconvertible tautomers (A, B, C and D) that have a core phenolic quinone to which various side chains are attached and which play an important role in fungal pathogenesis. The non-reducing polyketide synthase PKS1 was proposed to iteratively catalyze decarboxylation between acetyl-CoA and malonyl-CoA subunits for polyketide chain elongation. The released polyketide undergoes cyclization to form an aromatic ring, and proceeds via serial modification steps to produce the heptaketide back- bone of elsinochrome. As elsinochrome has a symmetrical structure, two identical heptaketides are fused to form a core 1,2-dihydrobenzo-perylene ring structure, which can then be successively modified to produce the various derivatives of elsinochrome. Some of these reactions may be cooperatively carried out, at least in part, by the products of RDT1, OXR1 and PKS1. PRF1, embedded within the elsinochrome cluster possibly functions to stabilize some of the biosynthetic enzymes required for elsinochrome production. As prefoldin is a hexamer containing 2 a and 4 b subunits, additional prefoldin subunits, whose coding genes may not immediately link to the elsinochrome biosynthetic gene cluster, are required to fulfill the chaperone function. In addition, no methyltransferase-coding gene exists within the biosynthetic gene cluster, even though elsinochrome has four methyl groups at positions C3, C7, C8 and C12. Apparently, the identified gene cluster does not contain the entire entourage of genes responsible for elsinochrome biosynthesis. Once elsinochrome is synthesized, it must be exported outside the fungal cells, which is probably accomplished by the ECT1 transporter, to avoid toxicity. The sequence is that of Elsinochrome reductase 1 from Elsinoe fawcettii (Citrus scab fungus).